A 274-amino-acid chain; its full sequence is Glutamate--cysteine ligase regulatory subunit (274 aa).

Lysine 263 carries the post-translational modification N6-acetyllysine.

The protein belongs to the aldo/keto reductase family. Glutamate--cysteine ligase light chain subfamily. As to quaternary structure, heterodimer of a catalytic heavy chain and a regulatory light chain. In terms of tissue distribution, in all tissues examined. Highest levels in skeletal muscle.

The protein operates within sulfur metabolism; glutathione biosynthesis; glutathione from L-cysteine and L-glutamate: step 1/2. This is Glutamate--cysteine ligase regulatory subunit (GCLM) from Homo sapiens (Human).